Consider the following 359-residue polypeptide: MAEHGAHITTASVVDDQPSIFEVVAQDSLMSAVRPALQHVVKVLAESNPAHFGFFWRWFDEIFTLLDLLLQQHYLSKTSASFSENFYGLKRIVMGDQHKLQRLANAGLPKQQFMKSIMFLVLLPYLKVKLEKLVSSLREEDEYSIHPPSSRWKRFYRAFLAAYPFVNMAWEGWFLVQQLRYILGKAQHHSPLLRLAGVRLGRLTVQDIQALEHKPAEASMMQLPAGSIGEKIKSALKKAVGGVALSLSTGLSVGVFFLQFLEWWYSSENQETIKSLTALPTPPPPVHLDYNSDSPLLPKMKTVCPLCRKNRVNDTVLATSGYVFCYRCVFHYVRSHQACPITGYPTEVQHLIKLYSPEN.

The Peroxisomal matrix segment spans residues 1–19; sequence MAEHGAHITTASVVDDQPS. The helical transmembrane segment at 20-47 threads the bilayer; the sequence is IFEVVAQDSLMSAVRPALQHVVKVLAES. At 48–51 the chain is on the cytoplasmic side; sequence NPAH. A helical transmembrane segment spans residues 52–76; sequence FGFFWRWFDEIFTLLDLLLQQHYLS. Residues 77–109 are Peroxisomal matrix-facing; sequence KTSASFSENFYGLKRIVMGDQHKLQRLANAGLP. Residues 110-139 form a helical membrane-spanning segment; it reads KQQFMKSIMFLVLLPYLKVKLEKLVSSLRE. Residues 140 to 144 lie on the Cytoplasmic side of the membrane; sequence EDEYS. Residues 145 to 183 form a helical membrane-spanning segment; the sequence is IHPPSSRWKRFYRAFLAAYPFVNMAWEGWFLVQQLRYIL. At 184-249 the chain is on the peroxisomal matrix side; the sequence is GKAQHHSPLL…VGGVALSLST (66 aa). Residues 250–277 form a helical membrane-spanning segment; it reads GLSVGVFFLQFLEWWYSSENQETIKSLT. At 278–359 the chain is on the cytoplasmic side; that stretch reads ALPTPPPPVH…HLIKLYSPEN (82 aa). Zn(2+) is bound by residues cysteine 304, cysteine 307, cysteine 325, and cysteine 328. The RING-type; degenerate zinc finger occupies 304–343; the sequence is CPLCRKNRVNDTVLATSGYVFCYRCVFHYVRSHQACPITG.

This sequence belongs to the pex2/pex10/pex12 family. As to quaternary structure, component of the PEX2-PEX10-PEX12 retrotranslocation channel, composed of PEX2, PEX10 and PEX12. Interacts with PEX19 via its cytoplasmic domain.

It is found in the peroxisome membrane. It participates in protein modification; protein ubiquitination. Functionally, component of a retrotranslocation channel required for peroxisome organization by mediating export of the PEX5 receptor from peroxisomes to the cytosol, thereby promoting PEX5 recycling. The retrotranslocation channel is composed of PEX2, PEX10 and PEX12; each subunit contributing transmembrane segments that coassemble into an open channel that specifically allows the passage of PEX5 through the peroxisomal membrane. PEX12 also regulates PEX5 recycling by activating the E3 ubiquitin-protein ligase activity of PEX10. When PEX5 recycling is compromised, PEX12 stimulates PEX10-mediated polyubiquitination of PEX5, leading to its subsequent degradation. This is Peroxisome assembly protein 12 (PEX12) from Bos taurus (Bovine).